The primary structure comprises 392 residues: Lipid-A-disaccharide synthase (392 aa).

Belongs to the LpxB family.

The catalysed reaction is a lipid X + a UDP-2-N,3-O-bis[(3R)-3-hydroxyacyl]-alpha-D-glucosamine = a lipid A disaccharide + UDP + H(+). It functions in the pathway bacterial outer membrane biogenesis; LPS lipid A biosynthesis. Condensation of UDP-2,3-diacylglucosamine and 2,3-diacylglucosamine-1-phosphate to form lipid A disaccharide, a precursor of lipid A, a phosphorylated glycolipid that anchors the lipopolysaccharide to the outer membrane of the cell. This is Lipid-A-disaccharide synthase from Prochlorococcus marinus (strain MIT 9313).